Here is an 850-residue protein sequence, read N- to C-terminus: MPGPRPRKGPKTSGQGAETAKQLGLFVEFNPEDMLLGMDETEDDGDLEAELLALTGETGSTSRKPAPKGRAPLPMAHIEKLAADCMRDVEEEGEEEEGLEDDADLLTELQEVLGVDEETGLVDDSEETSPDLSEEKTRDNTEQPVAPAAFQQALPAAVAQAGGPRGLQALLEERIQNYREAAASAKEAGEAAKARRCERGLKTLESQLATVRKGGKICEDEIPPPVALGKRPPAHQERPSKDSEIDSAGSCAMDPGDLSQPESSLPAVAALPDSDPDPQALLLARQREYKAAALSAKRAGDLDRARELMRIGKRFGTVLEALEKGQPVDLSGMPPAPEDLKALPQASEASAATQVLSPAVEQMQPVMSSDLPATPAAPAEPKTVLDALQQRLNRYREAGIQARASGDERKARMHDRIAKQYQDAIRAHQAGRKVDFAELPVPPGFPPIPGLEPRKDTEEDSVTATLAAAQKLASEDTALVDEDEERDTPAQAPLAKKPAQPLVPSSHLLNEPKASSSKESLSPSVREQVTLLEARKLQYQRAALQAKRRQDLEQAKSHLRVAKSLEAQIIQARAGQPIDLSKVPSPLTDEEGDFILIHHEDLRLSQKAEEVYAQLQKILLEQHEKCLLFSKQFMHQGNVAETTRFEKLAEDRKKQLEILQLAQAQGLDPPSHHFELKTLQTVRIFSELNSTEMHLIIVRGMNLPAPPGVTPDDLDAFVRFEFHYPNSDQAQKSKTAVVKNTNSPEFEQVFKLNINRNHRGFRRVIQSKGIKFEIFHKGSFFRSDKLVGTAHLKLERLEKECEIREIMEVLDGRKPTGGKLEVKVRLREPLSSQDVQMVTENWLVLEPRGL.

The segment covering 1–10 (MPGPRPRKGP) has biased composition (basic residues). 3 disordered regions span residues 1–21 (MPGP…ETAK), 54–73 (LTGE…RAPL), and 114–145 (GVDE…EQPV). A compositionally biased stretch (acidic residues) spans 114–129 (GVDEETGLVDDSEETS). Residues 167 to 213 (LQALLEERIQNYREAAASAKEAGEAAKARRCERGLKTLESQLATVRK) are a coiled coil. 2 disordered regions span residues 215–277 (GKIC…SDPD) and 436–525 (FAEL…SPSV). The span at 234–244 (AHQERPSKDSE) shows a compositional bias: basic and acidic residues. A compositionally biased stretch (pro residues) spans 440 to 450 (PVPPGFPPIPG). 2 stretches are compositionally biased toward low complexity: residues 489–502 (PAQA…AQPL) and 511–524 (EPKA…LSPS). Position 585 is a phosphoserine (serine 585). Phosphothreonine is present on threonine 588. The C2 domain maps to 668 to 807 (DPPSHHFELK…EKECEIREIM (140 aa)).

Interacts with CHMP4B. In terms of tissue distribution, expressed in epididymal sperm but not in testicular sperm (at protein level).

Its subcellular location is the nucleus. Transcription factor that binds specifically to the DRE (dual repressor element) and represses HTR1A gene transcription in neuronal cells. This chain is Coiled-coil and C2 domain-containing protein 1B (Cc2d1b), found in Rattus norvegicus (Rat).